The chain runs to 212 residues: Uridine kinase (212 aa).

An ATP-binding site is contributed by 13–20; that stretch reads GGSGSGKT.

Belongs to the uridine kinase family.

It localises to the cytoplasm. It catalyses the reaction uridine + ATP = UMP + ADP + H(+). It carries out the reaction cytidine + ATP = CMP + ADP + H(+). Its pathway is pyrimidine metabolism; CTP biosynthesis via salvage pathway; CTP from cytidine: step 1/3. It participates in pyrimidine metabolism; UMP biosynthesis via salvage pathway; UMP from uridine: step 1/1. This chain is Uridine kinase, found in Bacillus cereus (strain ATCC 10987 / NRS 248).